Consider the following 434-residue polypeptide: ATP-sensitive inward rectifier potassium channel 14 (434 aa).

The Cytoplasmic portion of the chain corresponds to Met1 to Asp81. Cys79 is subject to S-nitrosocysteine. The chain crosses the membrane as a helical span at residues Val82–Leu108. Residues Ile109–Ser131 lie on the Extracellular side of the membrane. Residues Phe132–Tyr148 constitute an intramembrane region (helical; Pore-forming). Residues Ser145–Val150 carry the Selectivity filter motif. The Extracellular portion of the chain corresponds to Gly149–Cys157. The helical transmembrane segment at Pro158–Lys185 threads the bilayer. The Cytoplasmic segment spans residues Met186–Pro434. The disordered stretch occupies residues Gln398–Pro434. Residues Lys407–Glu416 show a composition bias toward basic and acidic residues. Residues Ala418–Pro434 are compositionally biased toward low complexity.

It belongs to the inward rectifier-type potassium channel (TC 1.A.2.1) family. KCNJ14 subfamily.

It is found in the membrane. It catalyses the reaction K(+)(in) = K(+)(out). Its activity is regulated as follows. Channel activity is regulated by variations of cytosolic pH; channels are activated by alkaline and inhibited by acidic pH values. Inhibited by Ba(2+) and Cs(+) in a voltage-dependent manner; sensitivity to those inhibitors is lower than in other Kir channels. In terms of biological role, inward rectifier potassium channels are characterized by a greater tendency to allow potassium to flow into the cell rather than out of it. Their voltage dependence is regulated by the concentration of extracellular potassium; as external potassium is raised, the voltage range of the channel opening shifts to more positive voltages. This Mus musculus (Mouse) protein is ATP-sensitive inward rectifier potassium channel 14 (Kcnj14).